The sequence spans 245 residues: Biosynthetic peptidoglycan transglycosylase (245 aa).

The chain crosses the membrane as a helical span at residues 19–41 (CLRWVLAAPLLFAAASVLQVLFL).

This sequence belongs to the glycosyltransferase 51 family.

It is found in the cell inner membrane. The enzyme catalyses [GlcNAc-(1-&gt;4)-Mur2Ac(oyl-L-Ala-gamma-D-Glu-L-Lys-D-Ala-D-Ala)](n)-di-trans,octa-cis-undecaprenyl diphosphate + beta-D-GlcNAc-(1-&gt;4)-Mur2Ac(oyl-L-Ala-gamma-D-Glu-L-Lys-D-Ala-D-Ala)-di-trans,octa-cis-undecaprenyl diphosphate = [GlcNAc-(1-&gt;4)-Mur2Ac(oyl-L-Ala-gamma-D-Glu-L-Lys-D-Ala-D-Ala)](n+1)-di-trans,octa-cis-undecaprenyl diphosphate + di-trans,octa-cis-undecaprenyl diphosphate + H(+). It participates in cell wall biogenesis; peptidoglycan biosynthesis. Its function is as follows. Peptidoglycan polymerase that catalyzes glycan chain elongation from lipid-linked precursors. The protein is Biosynthetic peptidoglycan transglycosylase of Xanthomonas oryzae pv. oryzae (strain KACC10331 / KXO85).